The chain runs to 121 residues: Cell division protein FtsL (121 aa).

Residues methionine 1 to arginine 34 lie on the Cytoplasmic side of the membrane. Residues phenylalanine 35–alanine 57 form a helical membrane-spanning segment. At histidine 58 to lysine 121 the chain is on the periplasmic side.

Belongs to the FtsL family. Part of a complex composed of FtsB, FtsL and FtsQ.

It is found in the cell inner membrane. Functionally, essential cell division protein. May link together the upstream cell division proteins, which are predominantly cytoplasmic, with the downstream cell division proteins, which are predominantly periplasmic. The polypeptide is Cell division protein FtsL (Shigella dysenteriae serotype 1 (strain Sd197)).